The following is a 376-amino-acid chain: Protein STRICTOSIDINE SYNTHASE-LIKE 2 (376 aa).

Positions 1–23 (MMKLLLVVATSVALIFSVTDLSG) are cleaved as a signal peptide. Asn79 and Asn244 each carry an N-linked (GlcNAc...) asparagine glycan.

The protein belongs to the strictosidine synthase family.

It localises to the vacuole. The polypeptide is Protein STRICTOSIDINE SYNTHASE-LIKE 2 (Arabidopsis thaliana (Mouse-ear cress)).